We begin with the raw amino-acid sequence, 505 residues long: TBC1 domain family member 22B (505 aa).

Alanine 2 bears the N-acetylalanine mark. A phosphoserine mark is found at serine 58 and serine 116. A disordered region spans residues 105-146 (SKLRVKPERSQSTTSDVPANYKVIKSSSDAQLSRNSSDTCLR). Residues 129 to 146 (KSSSDAQLSRNSSDTCLR) show a composition bias toward polar residues. At serine 154 the chain carries Phosphoserine. Residues 210–434 (GVPREVRPIT…RLWDTYQSEP (225 aa)) enclose the Rab-GAP TBC domain.

In terms of assembly, interacts with ACBD3 and ARFGEF1. Interacts with YWHAB, YWHAE, YWHAG, YWHAH, YWHAQ and YWHAZ.

In terms of biological role, may act as a GTPase-activating protein for Rab family protein(s). The sequence is that of TBC1 domain family member 22B (TBC1D22B) from Homo sapiens (Human).